The primary structure comprises 539 residues: Lysophospholipid acyltransferase LPEAT2 (539 aa).

A helical membrane pass occupies residues 93-113; it reads LVICLPIALIRLVLFAASLAV. The HXXXXD motif motif lies at 178-183; it reads HVSYIE. 3 consecutive EF-hand domains span residues 426 to 455, 457 to 492, and 493 to 528; these read KRIFEFIDVEKVGSITFKQFLFASGHVLTQ, LFKQTCELAFSHCDADGDGYITIQELGEALKNTIPN, and LNKDEIRGMYHLLDDDQDQRISQNDLLSCLRRNPLL. The Ca(2+) site is built by aspartate 470, aspartate 472, aspartate 474, tyrosine 476, glutamate 481, aspartate 506, aspartate 508, aspartate 510, arginine 512, and aspartate 517.

This sequence belongs to the 1-acyl-sn-glycerol-3-phosphate acyltransferase family.

The protein localises to the golgi apparatus membrane. The protein resides in the late endosome membrane. It carries out the reaction a 1-acyl-sn-glycero-3-phosphoethanolamine + an acyl-CoA = a 1,2-diacyl-sn-glycero-3-phosphoethanolamine + CoA. It catalyses the reaction a 1-acyl-sn-glycero-3-phosphocholine + an acyl-CoA = a 1,2-diacyl-sn-glycero-3-phosphocholine + CoA. The enzyme catalyses a 1-acyl-sn-glycero-3-phospho-L-serine + an acyl-CoA = a 1,2-diacyl-sn-glycero-3-phospho-L-serine + CoA. The protein operates within lipid metabolism; phospholipid metabolism. Functionally, possesses acyl-CoA-dependent lysophospholipid acyltransferase activity with a subset of lysophospholipids as substrates. Exhibits strong acylation activity on lysophosphatidylethanolamine (LPE), and lower activity on lysophosphatidylcholine (LPC) and lysophosphatidylserine (LPS). Exhibits acylation activity on both LPE and LPC. Has a preference for 18:1-LPE over 16:0-LPE as acceptor. Palmitoyl-CoA (16:0-CoA) is a better acyl donor than oleoyl-CoA (18:1-CoA). Among several different acyl-CoA species the best acyl donor is eicosanoyl-CoA (20:0-CoA). Activity is calcium-independent. Its activity is essential for maintaining adequate levels of phosphatidylethanolamine (PE), LPE and LPC in the cells, which is crucial for plant growth regulation. This is Lysophospholipid acyltransferase LPEAT2 from Arabidopsis thaliana (Mouse-ear cress).